Consider the following 253-residue polypeptide: 5-oxoprolinase subunit A (253 aa).

Belongs to the LamB/PxpA family. As to quaternary structure, forms a complex composed of PxpA, PxpB and PxpC.

It carries out the reaction 5-oxo-L-proline + ATP + 2 H2O = L-glutamate + ADP + phosphate + H(+). Functionally, catalyzes the cleavage of 5-oxoproline to form L-glutamate coupled to the hydrolysis of ATP to ADP and inorganic phosphate. This is 5-oxoprolinase subunit A from Bacillus anthracis (strain CDC 684 / NRRL 3495).